Here is a 612-residue protein sequence, read N- to C-terminus: Anaerobic magnesium-protoporphyrin IX monomethyl ester cyclase (612 aa).

Residues 9-143 (NYHSGGAEIA…KAYEADNFAE (135 aa)) form the B12-binding domain. The region spanning 190 to 417 (PLGVRVAIPN…MKPKALTRGE (228 aa)) is the Radical SAM core domain. [4Fe-4S] cluster is bound by residues Cys204, Cys208, and Cys211.

It belongs to the BchE family. It depends on [4Fe-4S] cluster as a cofactor. Requires adenosylcob(III)alamin as cofactor.

The enzyme catalyses Mg-protoporphyrin IX 13-monomethyl ester + 3 S-adenosyl-L-methionine + H2O = 3,8-divinyl protochlorophyllide a + 3 5'-deoxyadenosine + 3 L-methionine + 4 H(+). The protein operates within porphyrin-containing compound metabolism; bacteriochlorophyll biosynthesis (light-independent). In terms of biological role, involved in the tetrapyrrole biosynthetic pathways leading to chlorophyll and bacteriochlorophyll (BChl). Catalyzes the anaerobic formation of the isocyclic ring (E-ring) in Mg-protoporphyrin monomethyl ester (MPE) to yield protochlorophyllide a (PChlide a) via a six-electron oxidation and the formation of an oxo group at position C13 using oxygen from a water molecule. In Cereibacter sphaeroides (strain ATCC 17023 / DSM 158 / JCM 6121 / CCUG 31486 / LMG 2827 / NBRC 12203 / NCIMB 8253 / ATH 2.4.1.) (Rhodobacter sphaeroides), this protein is Anaerobic magnesium-protoporphyrin IX monomethyl ester cyclase.